The following is a 388-amino-acid chain: Lipid-A-disaccharide synthase (388 aa).

The protein belongs to the LpxB family.

The enzyme catalyses a lipid X + a UDP-2-N,3-O-bis[(3R)-3-hydroxyacyl]-alpha-D-glucosamine = a lipid A disaccharide + UDP + H(+). It participates in bacterial outer membrane biogenesis; LPS lipid A biosynthesis. In terms of biological role, condensation of UDP-2,3-diacylglucosamine and 2,3-diacylglucosamine-1-phosphate to form lipid A disaccharide, a precursor of lipid A, a phosphorylated glycolipid that anchors the lipopolysaccharide to the outer membrane of the cell. The chain is Lipid-A-disaccharide synthase from Saccharophagus degradans (strain 2-40 / ATCC 43961 / DSM 17024).